Reading from the N-terminus, the 455-residue chain is Exodeoxyribonuclease 7 large subunit (455 aa).

The protein belongs to the XseA family. Heterooligomer composed of large and small subunits.

It is found in the cytoplasm. The enzyme catalyses Exonucleolytic cleavage in either 5'- to 3'- or 3'- to 5'-direction to yield nucleoside 5'-phosphates.. In terms of biological role, bidirectionally degrades single-stranded DNA into large acid-insoluble oligonucleotides, which are then degraded further into small acid-soluble oligonucleotides. The sequence is that of Exodeoxyribonuclease 7 large subunit from Koribacter versatilis (strain Ellin345).